We begin with the raw amino-acid sequence, 186 residues long: Peptidoglycan-recognition protein SD (186 aa).

The N-terminal stretch at 1–18 (MTWIGLLIVGLTAIAVQG) is a signal peptide. Positions 47–169 (AVIAHTAGGA…RQVSATKSPG (123 aa)) constitute an N-acetylmuramoyl-L-alanine amidase domain. Cysteines 57 and 63 form a disulfide. The N-linked (GlcNAc...) asparagine glycan is linked to Asn181.

The protein belongs to the N-acetylmuramoyl-L-alanine amidase 2 family. In larvae, it is mainly expressed in fat body. Also expressed in uninduced hemocytes and mbn-2 cells.

The protein localises to the secreted. Peptidoglycan-recognition protein that plays a key role in innate immunity by binding to peptidoglycans (PGN) of Gram-positive bacteria and activating the Toll pathway. Has no activity against on Gram-negative bacteria and fungi. Shows some partial redundancy with PRPGP-SA in Gram-positive bacteria recognition. May act by activating the proteolytic cleavage of Spatzle and the subsequent activation of Toll pathway. Recognizes S.aureus PGN. In Drosophila melanogaster (Fruit fly), this protein is Peptidoglycan-recognition protein SD (PGRP-SD).